The chain runs to 189 residues: MTDKTEKVAVDPETVFKRPRECDSPSYQKRQRMALLARKQGAGDSLIAGSAMSKEKKLMTGHAIPPSQLDSQIDDFTGFSKDGMMQKPGSNAPVGGNVTSNFSGDDLECRGIASSPKSQQEINADIKCQVVKEIRCLGRKYEKIFEMLEGVQGPTAVRKRFFESIIKEAARCMRRDFVKHLKKKLKRMI.

It belongs to the CT45 family.

The protein resides in the nucleus. The polypeptide is Cancer/testis antigen family 45 member A10 (Homo sapiens (Human)).